The following is a 329-amino-acid chain: Olfactory receptor 10J3 (329 aa).

Residues 1–26 are Extracellular-facing; it reads MPKLNSTFVTEFLFEGFSSFRRQHKL. Asparagine 5 carries an N-linked (GlcNAc...) asparagine glycan. The helical transmembrane segment at 27 to 47 threads the bilayer; the sequence is VFFVVFLTLYLLTLSGNVIIM. The Cytoplasmic portion of the chain corresponds to 48–55; sequence TIIRLDHH. The helical transmembrane segment at 56–76 threads the bilayer; sequence LHTPMYFFLCMLSISETCYTV. The Extracellular segment spans residues 77-100; sequence AIIPHMLSGLLNPHQPIATQSCAT. Cysteine 98 and cysteine 190 form a disulfide bridge. The chain crosses the membrane as a helical span at residues 101-121; sequence QLFFYLTFGINNCFLLTVMGY. The Cytoplasmic portion of the chain corresponds to 122 to 140; sequence DRYVAICNPLRYSVIMGKR. Residues 141–161 traverse the membrane as a helical segment; sequence ACIQLASGSLGIGLGMAIVQV. At 162–198 the chain is on the extracellular side; that stretch reads TSVFGLPFCDAFVISHFFCDVRHLLKLACTDTTVNEI. A helical membrane pass occupies residues 199-218; sequence INFVVSVCVLVLPMGLVFIS. The Cytoplasmic portion of the chain corresponds to 219-238; the sequence is YVLIISTILKIASAEGQKKA. The chain crosses the membrane as a helical span at residues 239–259; sequence FATCASHLTVVIIHYGCASII. Residues 260–272 lie on the Extracellular side of the membrane; that stretch reads YLKPKSQSSLGQD. A helical transmembrane segment spans residues 273 to 293; sequence RLISVTYTHHSPTEPCCVQPE. The Cytoplasmic portion of the chain corresponds to 294-329; the sequence is EQGGQRCSAQSRGAKNSVSLMKRGCEGFSFAFINMY.

It belongs to the G-protein coupled receptor 1 family.

It is found in the cell membrane. Its function is as follows. Odorant receptor. This Homo sapiens (Human) protein is Olfactory receptor 10J3 (OR10J3).